Reading from the N-terminus, the 78-residue chain is Large ribosomal subunit protein bL28 (78 aa).

This sequence belongs to the bacterial ribosomal protein bL28 family.

The chain is Large ribosomal subunit protein bL28 from Flavobacterium psychrophilum (strain ATCC 49511 / DSM 21280 / CIP 103535 / JIP02/86).